The primary structure comprises 634 residues: uncharacterized protein (634 aa).

The N-terminal stretch at 1–40 is a signal peptide; that stretch reads MWLQQRLKGLPGLLSSSWARRLLCLLGLLLLLLWFGGSGA. Topologically, residues 41–589 are extracellular; the sequence is RRAAGGLHLL…DEHMAQQDPG (549 aa). An N-linked (GlcNAc...) asparagine glycan is attached at N363. Residues 590-610 traverse the membrane as a helical segment; that stretch reads LPFLFWFSVASLITLFHLFLF. At 611–634 the chain is on the cytoplasmic side; the sequence is KLIYNEYCGPGAKPLFRSKEDPSV.

The protein localises to the membrane. This is an uncharacterized protein from Homo sapiens (Human).